Here is an 86-residue protein sequence, read N- to C-terminus: Small ribosomal subunit protein uS15 (86 aa).

It belongs to the universal ribosomal protein uS15 family. In terms of assembly, part of the 30S ribosomal subunit. Forms a bridge to the 50S subunit in the 70S ribosome, contacting the 23S rRNA.

Its function is as follows. One of the primary rRNA binding proteins, it binds directly to 16S rRNA where it helps nucleate assembly of the platform of the 30S subunit by binding and bridging several RNA helices of the 16S rRNA. In terms of biological role, forms an intersubunit bridge (bridge B4) with the 23S rRNA of the 50S subunit in the ribosome. The protein is Small ribosomal subunit protein uS15 of Vesicomyosocius okutanii subsp. Calyptogena okutanii (strain HA).